Here is a 100-residue protein sequence, read N- to C-terminus: Proline-rich protein 15-like protein (100 aa).

Residues 26–100 are disordered; sequence PDTYTQSEGG…LFDDREGKGQ (75 aa). Residues 53-62 show a composition bias toward basic and acidic residues; the sequence is RLEKIVDKNT.

Belongs to the PRR15 family.

This is Proline-rich protein 15-like protein (PRR15L) from Bos taurus (Bovine).